The chain runs to 198 residues: Molybdenum cofactor guanylyltransferase (198 aa).

GTP-binding positions include 14-16, K27, D73, and D103; that span reads LAG. D103 contributes to the Mg(2+) binding site.

It belongs to the MobA family. Monomer. Mg(2+) is required as a cofactor.

Its subcellular location is the cytoplasm. It catalyses the reaction Mo-molybdopterin + GTP + H(+) = Mo-molybdopterin guanine dinucleotide + diphosphate. Transfers a GMP moiety from GTP to Mo-molybdopterin (Mo-MPT) cofactor (Moco or molybdenum cofactor) to form Mo-molybdopterin guanine dinucleotide (Mo-MGD) cofactor. The protein is Molybdenum cofactor guanylyltransferase of Pseudomonas aeruginosa (strain ATCC 15692 / DSM 22644 / CIP 104116 / JCM 14847 / LMG 12228 / 1C / PRS 101 / PAO1).